Consider the following 258-residue polypeptide: tRNA (guanine-N(1)-)-methyltransferase (258 aa).

S-adenosyl-L-methionine contacts are provided by residues Gly122 and 142–147; that span reads LGDFVL.

This sequence belongs to the RNA methyltransferase TrmD family. As to quaternary structure, homodimer.

Its subcellular location is the cytoplasm. It catalyses the reaction guanosine(37) in tRNA + S-adenosyl-L-methionine = N(1)-methylguanosine(37) in tRNA + S-adenosyl-L-homocysteine + H(+). Its function is as follows. Specifically methylates guanosine-37 in various tRNAs. This chain is tRNA (guanine-N(1)-)-methyltransferase, found in Hahella chejuensis (strain KCTC 2396).